The chain runs to 1000 residues: Integrin alpha-PS5 (1000 aa).

FG-GAP repeat units lie at residues 15–74, 75–137, 145–198, 199–261, 262–323, 324–379, and 386–448; these read KHLK…GSCS, HYVL…DTPP, SLIP…AAQG, SYAV…GEIV, RKLH…FKFE, KKII…GLRD, and DAPS…SESR. N-linked (GlcNAc...) asparagine glycosylation is present at N58. The N-linked (GlcNAc...) asparagine glycan is linked to N231. N516, N592, N622, N732, N771, N829, N842, N853, and N922 each carry an N-linked (GlcNAc...) asparagine glycan. Residues 930–950 traverse the membrane as a helical segment; it reads IWYIILSLIAGHLLLGAMTYI. The Cytoplasmic segment spans residues 951 to 1000; sequence LYKLRFFKRGKKEELKRLLEEHRSETKEPATDCEGNQEEINVEMHSDLEN. Positions 971–980 are enriched in basic and acidic residues; that stretch reads EHRSETKEPA. The tract at residues 971–1000 is disordered; the sequence is EHRSETKEPATDCEGNQEEINVEMHSDLEN.

Belongs to the integrin alpha chain family. As to quaternary structure, heterodimer of an alpha and a beta subunit. Alpha-PS5 associates with beta-PS. Expressed in all follicle cells overlying the oocyte during mid-oogenesis, the strongest expression is observed in the cells covering the anterior end of the oocyte and in the cells forming the dorsal appendages. After completion of oocyte enlargement, expression in main body follicle cells is down-regulated but persists strongly in the dorsal appendage forming cells. Expressed in lamellocytes.

The protein localises to the membrane. In terms of biological role, possible role in cell-cell interactions. Minor involvement in the establishment of the oocyte anterior-posterior length. This chain is Integrin alpha-PS5, found in Drosophila melanogaster (Fruit fly).